A 90-amino-acid polypeptide reads, in one-letter code: Small ribosomal subunit protein uS15c (90 aa).

Belongs to the universal ribosomal protein uS15 family. In terms of assembly, part of the 30S ribosomal subunit.

The protein resides in the plastid. Its subcellular location is the chloroplast. The sequence is that of Small ribosomal subunit protein uS15c (rps15) from Glycine max (Soybean).